The following is a 226-amino-acid chain: NADH-ubiquinone oxidoreductase chain 6 (226 aa).

Helical transmembrane passes span 2-22 (STLGLLLILLGIIITCTFVIL), 28-48 (IYSILNLIVIYGCYASILLTV), 56-76 (IYILVNVGAIAVLFLFIVMMI), 90-110 (YNIYMFVGFIGLIGIMGILIT), and 169-189 (IWFIMACIILLIGMVGVIYIT).

Belongs to the complex I subunit 6 family.

It localises to the mitochondrion membrane. It carries out the reaction a ubiquinone + NADH + 5 H(+)(in) = a ubiquinol + NAD(+) + 4 H(+)(out). Its function is as follows. Core subunit of the mitochondrial membrane respiratory chain NADH dehydrogenase (Complex I) that is believed to belong to the minimal assembly required for catalysis. Complex I functions in the transfer of electrons from NADH to the respiratory chain. The immediate electron acceptor for the enzyme is believed to be ubiquinone. This chain is NADH-ubiquinone oxidoreductase chain 6 (nad6), found in Dictyostelium citrinum (Slime mold).